The primary structure comprises 845 residues: Protein P (845 aa).

The terminal protein domain (TP) stretch occupies residues 1–179 (MPLSYQHFRK…FCGSPYSWEQ (179 aa)). Residues 180 to 348 (ELQHGRLVIK…YCLSHLVNLR (169 aa)) are spacer. Residues 226–245 (GLQPHQGPLASSQPGRSGSI) form a disordered region. The segment at 349 to 692 (EDWGPCDEHG…YMNLYPVARQ (344 aa)) is polymerase/reverse transcriptase domain (RT). Residues 359 to 602 (EHHIRIPRTP…YSLNFMGYII (244 aa)) form the Reverse transcriptase domain. Aspartate 431, aspartate 553, and aspartate 554 together coordinate Mg(2+).

Belongs to the hepadnaviridae P protein family.

It carries out the reaction DNA(n) + a 2'-deoxyribonucleoside 5'-triphosphate = DNA(n+1) + diphosphate. The catalysed reaction is Endonucleolytic cleavage to 5'-phosphomonoester.. With respect to regulation, activated by host HSP70 and HSP40 in vitro to be able to bind the epsilon loop of the pgRNA. Because deletion of the RNase H region renders the protein partly chaperone-independent, the chaperones may be needed indirectly to relieve occlusion of the RNA-binding site by this domain. Inhibited by several reverse-transcriptase inhibitors: Lamivudine, Adefovir and Entecavir. In terms of biological role, multifunctional enzyme that converts the viral RNA genome into dsDNA in viral cytoplasmic capsids. This enzyme displays a DNA polymerase activity that can copy either DNA or RNA templates, and a ribonuclease H (RNase H) activity that cleaves the RNA strand of RNA-DNA heteroduplexes in a partially processive 3'- to 5'-endonucleasic mode. Neo-synthesized pregenomic RNA (pgRNA) are encapsidated together with the P protein, and reverse-transcribed inside the nucleocapsid. Initiation of reverse-transcription occurs first by binding the epsilon loop on the pgRNA genome, and is initiated by protein priming, thereby the 5'-end of (-)DNA is covalently linked to P protein. Partial (+)DNA is synthesized from the (-)DNA template and generates the relaxed circular DNA (RC-DNA) genome. After budding and infection, the RC-DNA migrates in the nucleus, and is converted into a plasmid-like covalently closed circular DNA (cccDNA). The activity of P protein does not seem to be necessary for cccDNA generation, and is presumably released from (+)DNA by host nuclear DNA repair machinery. This chain is Protein P, found in Homo sapiens (Human).